The primary structure comprises 304 residues: Acetylglutamate kinase (304 aa).

Substrate is bound by residues 70–71, Arg-92, and Asn-185; that span reads GG.

It belongs to the acetylglutamate kinase family. ArgB subfamily.

It is found in the cytoplasm. It carries out the reaction N-acetyl-L-glutamate + ATP = N-acetyl-L-glutamyl 5-phosphate + ADP. It participates in amino-acid biosynthesis; L-arginine biosynthesis; N(2)-acetyl-L-ornithine from L-glutamate: step 2/4. Catalyzes the ATP-dependent phosphorylation of N-acetyl-L-glutamate. This chain is Acetylglutamate kinase, found in Paracoccus denitrificans (strain Pd 1222).